We begin with the raw amino-acid sequence, 208 residues long: Uridine kinase (208 aa).

Glycine 12 to threonine 19 provides a ligand contact to ATP.

This sequence belongs to the uridine kinase family.

It localises to the cytoplasm. It carries out the reaction uridine + ATP = UMP + ADP + H(+). The catalysed reaction is cytidine + ATP = CMP + ADP + H(+). Its pathway is pyrimidine metabolism; CTP biosynthesis via salvage pathway; CTP from cytidine: step 1/3. It functions in the pathway pyrimidine metabolism; UMP biosynthesis via salvage pathway; UMP from uridine: step 1/1. The sequence is that of Uridine kinase from Streptococcus pyogenes serotype M3 (strain ATCC BAA-595 / MGAS315).